The sequence spans 260 residues: Deoxyribonuclease-1 (260 aa).

A glycan (N-linked (GlcNAc...) asparagine) is linked at asparagine 18. Glutamate 78 is an active-site residue. A disulfide bridge connects residues cysteine 101 and cysteine 104. Histidine 134 is a catalytic residue. A disulfide bridge connects residues cysteine 173 and cysteine 209.

The protein belongs to the DNase I family. It depends on Ca(2+) as a cofactor. Requires Mg(2+) as cofactor.

Its subcellular location is the secreted. It localises to the zymogen granule. It is found in the nucleus envelope. It carries out the reaction Endonucleolytic cleavage to 5'-phosphodinucleotide and 5'-phosphooligonucleotide end-products.. In terms of biological role, serum endocuclease secreted into body fluids by a wide variety of exocrine and endocrine organs. Expressed by non-hematopoietic tissues and preferentially cleaves protein-free DNA. Among other functions, seems to be involved in cell death by apoptosis. Binds specifically to G-actin and blocks actin polymerization. Together with DNASE1L3, plays a key role in degrading neutrophil extracellular traps (NETs). NETs are mainly composed of DNA fibers and are released by neutrophils to bind pathogens during inflammation. Degradation of intravascular NETs by DNASE1 and DNASE1L3 is required to prevent formation of clots that obstruct blood vessels and cause organ damage following inflammation. This is Deoxyribonuclease-1 (DNASE1) from Ovis aries (Sheep).